The chain runs to 197 residues: HTH-type transcriptional regulator BetI (197 aa).

An HTH tetR-type domain is found at 8–68 (PIRRQQLIEA…ATMGYIMSML (61 aa)). The segment at residues 31 to 50 (SIALIARLAGVSNGIISHYF) is a DNA-binding region (H-T-H motif).

Its pathway is amine and polyamine biosynthesis; betaine biosynthesis via choline pathway [regulation]. Repressor involved in the biosynthesis of the osmoprotectant glycine betaine. It represses transcription of the choline transporter BetT and the genes of BetAB involved in the synthesis of glycine betaine. The polypeptide is HTH-type transcriptional regulator BetI (Pseudomonas fluorescens (strain ATCC BAA-477 / NRRL B-23932 / Pf-5)).